We begin with the raw amino-acid sequence, 214 residues long: Calcineurin B homologous protein 3 (214 aa).

A disordered region spans residues 1–20 (MGAAHSASEEVRELEGKTGF). Residue Gly-2 is the site of N-myristoyl glycine attachment. Basic and acidic residues predominate over residues 7–16 (ASEEVRELEG). The 36-residue stretch at 110 to 145 (SRKEKLRFLFHMYDSDSDGRITLEEYRNVVEELLSG) folds into the EF-hand domain. Ca(2+) is bound by residues Asp-123, Asp-125, Asp-127, Arg-129, and Glu-134.

The protein belongs to the calcineurin regulatory subunit family. CHP subfamily. As to quaternary structure, monomer. Homodimer; disulfide-linked. Interacts with SLC9A1/NHE1; the interaction enables an optimal Na(+)/H(+) exchange activity. As to expression, expressed in mature megakaryocytes and polymorphonuclear granulocytes (at protein level). Abundantly expressed in heart. Also expressed at a lower level in adult testis and salivary gland, and in the placenta.

The protein localises to the nucleus. The protein resides in the cytoplasm. Its subcellular location is the membrane. It localises to the cell membrane. It is found in the cell projection. The protein localises to the lamellipodium. The protein resides in the ruffle membrane. Functionally, functions as an integral cofactor in cell pH regulation by controlling plasma membrane-type Na(+)/H(+) exchange activity. Promotes the maturation, transport, cell surface stability and exchange activity of SLC9A1/NHE1 at the plasma membrane. Promotes the induction of hematopoietic stem cell differentiation toward megakaryocytic lineage. Essential for the coupling of ERK cascade activation with the expression of ETS family genes in megakaryocytic differentiation. Also involved in granulocytic differentiation in a ERK-dependent manner. Inhibits the phosphatase activity of calcineurin. This chain is Calcineurin B homologous protein 3 (TESC), found in Homo sapiens (Human).